A 107-amino-acid polypeptide reads, in one-letter code: Large ribosomal subunit protein P2-A (107 aa).

The interval 85–107 (GAAAPAAAAEEEEDDDMGFGLFD) is disordered.

The protein belongs to the eukaryotic ribosomal protein P1/P2 family. P1 and P2 exist as dimers at the large ribosomal subunit. Phosphorylated.

Functionally, plays an important role in the elongation step of protein synthesis. The polypeptide is Large ribosomal subunit protein P2-A (Trypanosoma cruzi).